A 263-amino-acid chain; its full sequence is Pyrroline-5-carboxylate reductase (263 aa).

It belongs to the pyrroline-5-carboxylate reductase family.

It is found in the cytoplasm. It catalyses the reaction L-proline + NADP(+) = (S)-1-pyrroline-5-carboxylate + NADPH + 2 H(+). The enzyme catalyses L-proline + NAD(+) = (S)-1-pyrroline-5-carboxylate + NADH + 2 H(+). It functions in the pathway amino-acid biosynthesis; L-proline biosynthesis; L-proline from L-glutamate 5-semialdehyde: step 1/1. Its function is as follows. Catalyzes the reduction of 1-pyrroline-5-carboxylate (PCA) to L-proline. The polypeptide is Pyrroline-5-carboxylate reductase (Treponema pallidum (strain Nichols)).